A 947-amino-acid chain; its full sequence is Protein NETWORKED 2D (947 aa).

The region spanning Tyr10 to Leu90 is the NAB domain. Coiled coils occupy residues Lys176–Glu205, Met247–Ser342, and Thr375–Lys433. 2 disordered regions span residues Asn455–Asp555 and Glu580–Asp620. Over residues Pro474–Gln514 the composition is skewed to basic and acidic residues. Residues Thr525–Glu536 show a composition bias toward polar residues. Composition is skewed to basic and acidic residues over residues Ser537–Asp555, Glu580–Asp589, and Glu610–Asp620. 2 coiled-coil regions span residues Arg645 to Lys684 and Gly744 to Ser773.

It belongs to the NET family.

Functionally, plant-specific actin binding protein. May be part of a membrane-cytoskeletal adapter complex. This chain is Protein NETWORKED 2D, found in Arabidopsis thaliana (Mouse-ear cress).